A 462-amino-acid polypeptide reads, in one-letter code: MDAMQKTIEYTSVSRIAGPLMVIDGIEGIAYGEIVDITTPNGDKRTGQVLEAREEIAVVQVFEGTSELNTSETKVRFTGDTAKIGVSHDMLGRIFNGAGKPLDGGPEIIAEKKLDINGYPLNPVSRNPPNAFVQTGVSTIDGTNTLVRGQKIPIFSGSGLPHNKLATQIARQAKVRGEGEQFAVVFAAMGITGEESNYFMDEFKKTGALEKAVVFINLADDPAIERILTPRIALTTAEYLAYEKGMHVLVILTDLTNYCEALREIAAARNEVPGRRGYPGYMYTDLACLYERAGRVKGKEGTVTQIPILTMPDDDITHPIPDLTGYITEGQIVLSRELNRKGIYPPVDILPSLSRLAGNGQGEGKTRDDHSKVISQAYAAYAEGRGLRDLVAVVGEEALTERDRSFLKFADAFENSIVTQGVDEDRSIEETLDYIWGLLTILPREELKRVSDELIEKYLPKK.

It belongs to the ATPase alpha/beta chains family. As to quaternary structure, has multiple subunits with at least A(3), B(3), C, D, E, F, H, I and proteolipid K(x).

Its subcellular location is the cell membrane. Functionally, component of the A-type ATP synthase that produces ATP from ADP in the presence of a proton gradient across the membrane. The B chain is a regulatory subunit. This Methanococcus maripaludis (strain C5 / ATCC BAA-1333) protein is A-type ATP synthase subunit B.